A 311-amino-acid chain; its full sequence is Ribosomal RNA small subunit methyltransferase H (311 aa).

Residues 33–35 (GGH), D53, F77, D98, and Q105 contribute to the S-adenosyl-L-methionine site.

It belongs to the methyltransferase superfamily. RsmH family.

Its subcellular location is the cytoplasm. The catalysed reaction is cytidine(1402) in 16S rRNA + S-adenosyl-L-methionine = N(4)-methylcytidine(1402) in 16S rRNA + S-adenosyl-L-homocysteine + H(+). In terms of biological role, specifically methylates the N4 position of cytidine in position 1402 (C1402) of 16S rRNA. This chain is Ribosomal RNA small subunit methyltransferase H, found in Thiobacillus denitrificans (strain ATCC 25259 / T1).